Here is a 955-residue protein sequence, read N- to C-terminus: 2-oxoglutarate dehydrogenase E1 component (955 aa).

Belongs to the alpha-ketoglutarate dehydrogenase family. Homodimer. Part of the 2-oxoglutarate dehydrogenase (OGDH) complex composed of E1 (2-oxoglutarate dehydrogenase), E2 (dihydrolipoamide succinyltransferase) and E3 (dihydrolipoamide dehydrogenase); the complex contains multiple copies of the three enzymatic components (E1, E2 and E3). It depends on thiamine diphosphate as a cofactor.

It carries out the reaction N(6)-[(R)-lipoyl]-L-lysyl-[protein] + 2-oxoglutarate + H(+) = N(6)-[(R)-S(8)-succinyldihydrolipoyl]-L-lysyl-[protein] + CO2. In terms of biological role, E1 component of the 2-oxoglutarate dehydrogenase (OGDH) complex which catalyzes the decarboxylation of 2-oxoglutarate, the first step in the conversion of 2-oxoglutarate to succinyl-CoA and CO(2). The chain is 2-oxoglutarate dehydrogenase E1 component from Bacillus anthracis (strain A0248).